The sequence spans 121 residues: Chromosome transmission fidelity protein 8 homolog (121 aa).

This sequence belongs to the CTF8 family. Component of the CTF18-RFC complex, which consists of CTF18, CTF8, DSCC1, RFC2, RFC3, RFC4 and RFC5. The CTF18-RFC complex does not interact with the Rad9/Rad1/Hus1 complex. The CTF18-RFC complex interacts with POLH. CTF18/CTF8/DSCC1 associate with PCNA. CTF8 exists as a dimer with DSCC1.

The protein localises to the nucleus. In terms of biological role, chromosome cohesion factor involved in sister chromatid cohesion and fidelity of chromosome transmission. Component of one of the cell nuclear antigen loader complexes, CTF18-replication factor C (CTF18-RFC), which consists of CTF18, CTF8, DSCC1, RFC2, RFC3, RFC4 and RFC5. The CTF18-RFC complex binds to single-stranded and primed DNAs and has weak ATPase activity that is stimulated the presence of primed DNA, replication protein A (RPA) and proliferating cell nuclear antigen (PCNA). The CTF18-RFC complex catalyzes the ATP-dependent loading of PCNA onto primed and gapped DNA. It also interacts with and stimulates POLH, which is suggestive of a protein network that coordinates DNA repair, recombination and chromosome cohesion reactions with replication fork progression. This Rattus norvegicus (Rat) protein is Chromosome transmission fidelity protein 8 homolog.